Here is a 210-residue protein sequence, read N- to C-terminus: Proteasome subunit beta (210 aa).

The propeptide at 1–9 is removed in mature form; by autocatalysis; sequence MDNDKHLKG. Thr-10 serves as the catalytic Nucleophile.

This sequence belongs to the peptidase T1B family. As to quaternary structure, the 20S proteasome core is composed of 14 alpha and 14 beta subunits that assemble into four stacked heptameric rings, resulting in a barrel-shaped structure. The two inner rings, each composed of seven catalytic beta subunits, are sandwiched by two outer rings, each composed of seven alpha subunits. The catalytic chamber with the active sites is on the inside of the barrel. Has a gated structure, the ends of the cylinder being occluded by the N-termini of the alpha-subunits. Is capped at one or both ends by the proteasome regulatory ATPase, PAN.

Its subcellular location is the cytoplasm. It catalyses the reaction Cleavage of peptide bonds with very broad specificity.. With respect to regulation, the formation of the proteasomal ATPase PAN-20S proteasome complex, via the docking of the C-termini of PAN into the intersubunit pockets in the alpha-rings, triggers opening of the gate for substrate entry. Interconversion between the open-gate and close-gate conformations leads to a dynamic regulation of the 20S proteasome proteolysis activity. Its function is as follows. Component of the proteasome core, a large protease complex with broad specificity involved in protein degradation. This is Proteasome subunit beta from Methanococcoides burtonii (strain DSM 6242 / NBRC 107633 / OCM 468 / ACE-M).